A 103-amino-acid polypeptide reads, in one-letter code: Large ribosomal subunit protein bL21 (103 aa).

The protein belongs to the bacterial ribosomal protein bL21 family. In terms of assembly, part of the 50S ribosomal subunit. Contacts protein L20.

Its function is as follows. This protein binds to 23S rRNA in the presence of protein L20. This Nitrosospira multiformis (strain ATCC 25196 / NCIMB 11849 / C 71) protein is Large ribosomal subunit protein bL21.